The primary structure comprises 49 residues: Osteocalcin (49 aa).

Residue Gln-1 is modified to Pyrrolidone carboxylic acid. The 47-residue stretch at 1–47 (QLINGQGAPAPYPDPLEPKREVCELNPDCDELADQVGLQDAYQRFYG) folds into the Gla domain. Pro-9 is modified (4-hydroxyproline). Ca(2+) is bound by residues Glu-17, Glu-21, Glu-24, and Asp-30. Residues Glu-17, Glu-21, and Glu-24 each carry the 4-carboxyglutamate modification. Residues Cys-23 and Cys-29 are joined by a disulfide bond.

The protein belongs to the osteocalcin/matrix Gla protein family. Post-translationally, gamma-carboxyglutamate residues are formed by vitamin K dependent carboxylation by GGCX. These residues are essential for the binding of calcium. Decarboxylation promotes the hormone activity.

It is found in the secreted. Functionally, the carboxylated form is one of the main organic components of the bone matrix, which constitutes 1-2% of the total bone protein: it acts as a negative regulator of bone formation and is required to limit bone formation without impairing bone resorption or mineralization. The carboxylated form binds strongly to apatite and calcium. The uncarboxylated form acts as a hormone secreted by osteoblasts, which regulates different cellular processes, such as energy metabolism, male fertility and brain development. Regulates of energy metabolism by acting as a hormone favoring pancreatic beta-cell proliferation, insulin secretion and sensitivity and energy expenditure. Uncarboxylated osteocalcin hormone also promotes testosterone production in the testes: acts as a ligand for G protein-coupled receptor GPRC6A at the surface of Leydig cells, initiating a signaling response that promotes the expression of enzymes required for testosterone synthesis in a CREB-dependent manner. Also acts as a regulator of brain development: osteocalcin hormone crosses the blood-brain barrier and acts as a ligand for GPR158 on neurons, initiating a signaling response that prevents neuronal apoptosis in the hippocampus, favors the synthesis of all monoamine neurotransmitters and inhibits that of gamma-aminobutyric acid (GABA). Osteocalcin also crosses the placenta during pregnancy and maternal osteocalcin is required for fetal brain development. In Oryctolagus cuniculus (Rabbit), this protein is Osteocalcin (BGLAP).